The primary structure comprises 119 residues: Ribonuclease P protein component (119 aa).

Belongs to the RnpA family. Consists of a catalytic RNA component (M1 or rnpB) and a protein subunit.

The enzyme catalyses Endonucleolytic cleavage of RNA, removing 5'-extranucleotides from tRNA precursor.. Functionally, RNaseP catalyzes the removal of the 5'-leader sequence from pre-tRNA to produce the mature 5'-terminus. It can also cleave other RNA substrates such as 4.5S RNA. The protein component plays an auxiliary but essential role in vivo by binding to the 5'-leader sequence and broadening the substrate specificity of the ribozyme. The chain is Ribonuclease P protein component from Clostridium acetobutylicum (strain ATCC 824 / DSM 792 / JCM 1419 / IAM 19013 / LMG 5710 / NBRC 13948 / NRRL B-527 / VKM B-1787 / 2291 / W).